We begin with the raw amino-acid sequence, 609 residues long: Proline--tRNA ligase (609 aa).

The protein belongs to the class-II aminoacyl-tRNA synthetase family. ProS type 1 subfamily. In terms of assembly, homodimer.

The protein resides in the cytoplasm. It catalyses the reaction tRNA(Pro) + L-proline + ATP = L-prolyl-tRNA(Pro) + AMP + diphosphate. Its function is as follows. Catalyzes the attachment of proline to tRNA(Pro) in a two-step reaction: proline is first activated by ATP to form Pro-AMP and then transferred to the acceptor end of tRNA(Pro). As ProRS can inadvertently accommodate and process non-cognate amino acids such as alanine and cysteine, to avoid such errors it has two additional distinct editing activities against alanine. One activity is designated as 'pretransfer' editing and involves the tRNA(Pro)-independent hydrolysis of activated Ala-AMP. The other activity is designated 'posttransfer' editing and involves deacylation of mischarged Ala-tRNA(Pro). The misacylated Cys-tRNA(Pro) is not edited by ProRS. In Synechococcus sp. (strain JA-3-3Ab) (Cyanobacteria bacterium Yellowstone A-Prime), this protein is Proline--tRNA ligase.